Reading from the N-terminus, the 248-residue chain is Triosephosphate isomerase (248 aa).

Substrate-binding residues include Asn10 and Lys12. His95 functions as the Electrophile in the catalytic mechanism. Catalysis depends on Glu165, which acts as the Proton acceptor.

The protein belongs to the triosephosphate isomerase family. In terms of assembly, homodimer.

It catalyses the reaction D-glyceraldehyde 3-phosphate = dihydroxyacetone phosphate. The protein operates within carbohydrate biosynthesis; gluconeogenesis. Its pathway is carbohydrate degradation; glycolysis; D-glyceraldehyde 3-phosphate from glycerone phosphate: step 1/1. This Kluyveromyces marxianus (Yeast) protein is Triosephosphate isomerase (TPI1).